The following is a 461-amino-acid chain: MYINTLFWKQNPTGDKKNQEEKMQKTLLSCLITTLLLITVADSMKDTSVRLKLAHRDTLLPKPLSRIEDVIGADQKRHSLISRKRNSTVGVKMDLGSGIDYGTAQYFTEIRVGTPAKKFRVVVDTGSELTWVNCRYRARGKDNRRVFRADESKSFKTVGCLTQTCKVDLMNLFSLTTCPTPSTPCSYDYRYADGSAAQGVFAKETITVGLTNGRMARLPGHLIGCSSSFTGQSFQGADGVLGLAFSDFSFTSTATSLYGAKFSYCLVDHLSNKNVSNYLIFGSSRSTKTAFRRTTPLDLTRIPPFYAINVIGISLGYDMLDIPSQVWDATSGGGTILDSGTSLTLLADAAYKQVVTGLARYLVELKRVKPEGVPIEYCFSFTSGFNVSKLPQLTFHLKGGARFEPHRKSYLVDAAPGVKCLGFVSAGTPATNVIGNIMQQNYLWEFDLMASTLSFAPSACT.

Asn86 is a glycosylation site (N-linked (GlcNAc...) asparagine). The region spanning 106–456 (YFTEIRVGTP…DLMASTLSFA (351 aa)) is the Peptidase A1 domain. The active site involves Asp124. Residue Asn274 is glycosylated (N-linked (GlcNAc...) asparagine). Residue Asp338 is part of the active site. N-linked (GlcNAc...) asparagine glycosylation is present at Asn386.

It belongs to the peptidase A1 family.

Its subcellular location is the plastid. The protein localises to the chloroplast. Repressed by pepstatin A. Functionally, aspartic proteinase that can use azocasein as substrate and regulates endogenous sugar levels (e.g. sucrose, glucose and fructose) by modulating starch accumulation and remobilization. Influences general morphology and development. In Arabidopsis thaliana (Mouse-ear cress), this protein is Aspartic proteinase NANA, chloroplast.